A 235-amino-acid polypeptide reads, in one-letter code: MSSELLISNSKPRPEGLRKLCEGETVILPRDITPSKCAYFLKQNIVFISYIFIHIIITIILNRLALSAHGNTLIIILAALLITISLFLLLLLPYLSCSRYKLRCLDDDCKFKLLAEVITHKPNMDLSTWDRIAYDMNQFVYDRRICADRSFFYDGSYCYQVFKKLVATPYLVNSNMNSIYADLEMRSNGATNINDSGNSSLHIELGTYIFKALAVFRNSVDKYWEDKYPEMGVTV.

At 1–44 (MSSELLISNSKPRPEGLRKLCEGETVILPRDITPSKCAYFLKQN) the chain is on the cytoplasmic side. Residues 45 to 65 (IVFISYIFIHIIITIILNRLA) traverse the membrane as a helical segment. Residues 66–72 (LSAHGNT) lie on the Extracellular side of the membrane. A helical membrane pass occupies residues 73-93 (LIIILAALLITISLFLLLLLP). Residues 94–235 (YLSCSRYKLR…DKYPEMGVTV (142 aa)) are Cytoplasmic-facing.

It belongs to the DUP/COS family. In terms of assembly, interacts according to large scale protein interaction studies with BZZ1, SRB4 and SUA7.

The protein resides in the cell membrane. The sequence is that of DUP240 protein DFP4 from Saccharomyces cerevisiae (strain ATCC 204508 / S288c) (Baker's yeast).